We begin with the raw amino-acid sequence, 230 residues long: Ureidoacrylate amidohydrolase RutB (230 aa).

Aspartate 24 functions as the Proton acceptor in the catalytic mechanism. Lysine 133 is a catalytic residue. Cysteine 166 (nucleophile) is an active-site residue.

It belongs to the isochorismatase family. RutB subfamily.

It carries out the reaction (Z)-3-ureidoacrylate + H2O + H(+) = (Z)-3-aminoacrylate + NH4(+) + CO2. The catalysed reaction is (Z)-3-ureidoacrylate + H2O = (Z)-3-aminoacrylate + carbamate + H(+). It catalyses the reaction (Z)-2-methylureidoacrylate + H2O + H(+) = (Z)-2-methylaminoacrylate + NH4(+) + CO2. Its function is as follows. Hydrolyzes ureidoacrylate to form aminoacrylate and carbamate. The carbamate hydrolyzes spontaneously, thereby releasing one of the nitrogen atoms of the pyrimidine ring as ammonia and one of its carbon atoms as CO2. This is Ureidoacrylate amidohydrolase RutB from Escherichia coli O150:H5 (strain SE15).